The following is a 218-amino-acid chain: Large ribosomal subunit protein uL3 (218 aa).

A disordered region spans residues 127 to 167 (GFSRGPMSHGSKNHRLPGSIGAGTTPGRVYPGKRMAGRMGG).

This sequence belongs to the universal ribosomal protein uL3 family. As to quaternary structure, part of the 50S ribosomal subunit. Forms a cluster with proteins L14 and L19.

One of the primary rRNA binding proteins, it binds directly near the 3'-end of the 23S rRNA, where it nucleates assembly of the 50S subunit. This chain is Large ribosomal subunit protein uL3, found in Prochlorococcus marinus (strain NATL1A).